The sequence spans 288 residues: MKIAVYGKGGIGKSTTSCNISIALARRGKKVLQIGCDPKHDSTFTLTGFLIPTIIDTLQSKDYHYEDVWPEDVIYKGYGEVNCVEAGGPPAGAGCGGYVVGETVKLLKELNAFYEYDVILFDVLGDVVCGGFAAPLNYADYCIIITDNGFDALFAANRIAASVREKARTHPLRLAGLVGNRTSKRDLIDKYVEACPMPVLEVLPLIEDIRVSRVKGKTLFEMAETDSSLEYVCDYYLNIADQILSQPEGIVPKEIPDRELFTLLSDFYLNININSNNLEKNESSFLII.

Residues 10–15 (GIGKST) and Lys-39 contribute to the ATP site. Ser-14 is a binding site for Mg(2+). [4Fe-4S] cluster is bound by residues Cys-95 and Cys-129. 180–181 (NR) contributes to the ATP binding site.

The protein belongs to the NifH/BchL/ChlL family. In terms of assembly, homodimer. Protochlorophyllide reductase is composed of three subunits; ChlL, ChlN and ChlB. The cofactor is [4Fe-4S] cluster.

It is found in the plastid. It localises to the chloroplast. It carries out the reaction chlorophyllide a + oxidized 2[4Fe-4S]-[ferredoxin] + 2 ADP + 2 phosphate = protochlorophyllide a + reduced 2[4Fe-4S]-[ferredoxin] + 2 ATP + 2 H2O. Its pathway is porphyrin-containing compound metabolism; chlorophyll biosynthesis (light-independent). In terms of biological role, component of the dark-operative protochlorophyllide reductase (DPOR) that uses Mg-ATP and reduced ferredoxin to reduce ring D of protochlorophyllide (Pchlide) to form chlorophyllide a (Chlide). This reaction is light-independent. The L component serves as a unique electron donor to the NB-component of the complex, and binds Mg-ATP. The chain is Light-independent protochlorophyllide reductase iron-sulfur ATP-binding protein from Chara vulgaris (Common stonewort).